The sequence spans 114 residues: Macrophage migration inhibitory factor homolog (114 aa).

Catalysis depends on proline 2, which acts as the Proton acceptor; via imino nitrogen. Substrate-binding residues include lysine 33 and asparagine 98.

Belongs to the MIF family.

It localises to the secreted. It carries out the reaction L-dopachrome = 5,6-dihydroxyindole-2-carboxylate. It catalyses the reaction 3-phenylpyruvate = enol-phenylpyruvate. In terms of biological role, tautomerization of the methyl ester of L-dopachrome. Inhibits migration of human peripheral blood mononuclear cells. The sequence is that of Macrophage migration inhibitory factor homolog from Trichuris trichiura (Whipworm).